Reading from the N-terminus, the 78-residue chain is MASTKYLVLLFICLSVLLTPGLGTDPVPTPPGLHIPCGKGFTSKECNKYCTGVGYRRGYCAPDEEYPQISSCYCKWRI.

The N-terminal stretch at 1–23 (MASTKYLVLLFICLSVLLTPGLG) is a signal peptide. Disulfide bonds link Cys37-Cys60, Cys46-Cys72, and Cys50-Cys74.

The protein belongs to the DEFL family.

It is found in the secreted. The sequence is that of Defensin-like protein 281 from Arabidopsis thaliana (Mouse-ear cress).